Here is a 327-residue protein sequence, read N- to C-terminus: tRNA uridine(34) hydroxylase (327 aa).

Residues 130 to 224 enclose the Rhodanese domain; sequence LDEDTVVLDT…YGKDPEVRGE (95 aa). C184 serves as the catalytic Cysteine persulfide intermediate.

This sequence belongs to the TrhO family.

It catalyses the reaction uridine(34) in tRNA + AH2 + O2 = 5-hydroxyuridine(34) in tRNA + A + H2O. Catalyzes oxygen-dependent 5-hydroxyuridine (ho5U) modification at position 34 in tRNAs. This chain is tRNA uridine(34) hydroxylase, found in Streptococcus suis (strain 98HAH33).